The sequence spans 343 residues: MSKRPTIAITSGEPAGIGPEISIRAAWELRADVKSILIGDAAFLAMTAAAINPAIRLSALSLQAVRNSGVPDFSRDQIAVIDCPLAAHVVPGKLDAQNGRYVLQTLDIGIEGAQQGWFDAIVTAPLQKSTINDAGVPFTGHTEYLADKTNTAQVVMMLATNATPQPLRVGLATTHLALKDVAAAITIDSLAGILDILLADLQNKFGIAKPRILVAGLNPHAGEGGYLGREEIEVITPVLQAAQAKGFDVRGPYPADTLFQQKYLEDADCVLAMYHDQGLPVLKYASFGLGVNITLGLPLIRTSVDHGTALDLAAAGLGQADHGSMLEAMRIAAQMAAAARTSS.

The substrate site is built by His-141 and Thr-142. A divalent metal cation contacts are provided by His-175, His-220, and His-275. 3 residues coordinate substrate: Lys-283, Asn-292, and Arg-301.

Belongs to the PdxA family. Homodimer. Zn(2+) is required as a cofactor. Mg(2+) serves as cofactor. The cofactor is Co(2+).

The protein localises to the cytoplasm. It catalyses the reaction 4-(phosphooxy)-L-threonine + NAD(+) = 3-amino-2-oxopropyl phosphate + CO2 + NADH. Its pathway is cofactor biosynthesis; pyridoxine 5'-phosphate biosynthesis; pyridoxine 5'-phosphate from D-erythrose 4-phosphate: step 4/5. Its function is as follows. Catalyzes the NAD(P)-dependent oxidation of 4-(phosphooxy)-L-threonine (HTP) into 2-amino-3-oxo-4-(phosphooxy)butyric acid which spontaneously decarboxylates to form 3-amino-2-oxopropyl phosphate (AHAP). The chain is 4-hydroxythreonine-4-phosphate dehydrogenase from Janthinobacterium sp. (strain Marseille) (Minibacterium massiliensis).